Consider the following 37-residue polypeptide: Potassium channel toxin alpha-KTx 1.3 (37 aa).

Pyrrolidone carboxylic acid is present on glutamine 1. 3 disulfide bridges follow: cysteine 7-cysteine 28, cysteine 13-cysteine 33, and cysteine 17-cysteine 35. Residues 26–33 are interaction with Ca(2+)-activated K(+) channels; the sequence is GKCMGKKC.

It belongs to the short scorpion toxin superfamily. Potassium channel inhibitor family. Alpha-KTx 01 subfamily. Expressed by the venom gland.

The protein resides in the secreted. Its function is as follows. Blocks selectively the high conductance calcium-activated (maxi-K) potassium channels (KCa1.1/KCNMA1). In Hottentotta tamulus (Eastern Indian scorpion), this protein is Potassium channel toxin alpha-KTx 1.3.